The sequence spans 418 residues: Tyrosine--tRNA ligase (418 aa).

Residue Tyr34 coordinates L-tyrosine. The 'HIGH' region signature appears at 39 to 48 (PTADSLHLGH). The L-tyrosine site is built by Tyr169 and Gln173. Positions 229–233 (KFGKS) match the 'KMSKS' region motif. Position 232 (Lys232) interacts with ATP. The S4 RNA-binding domain occupies 352–418 (LNIVEILVSS…GKKKYAVLTY (67 aa)).

It belongs to the class-I aminoacyl-tRNA synthetase family. TyrS type 1 subfamily. Homodimer.

It is found in the cytoplasm. The catalysed reaction is tRNA(Tyr) + L-tyrosine + ATP = L-tyrosyl-tRNA(Tyr) + AMP + diphosphate + H(+). Its function is as follows. Catalyzes the attachment of tyrosine to tRNA(Tyr) in a two-step reaction: tyrosine is first activated by ATP to form Tyr-AMP and then transferred to the acceptor end of tRNA(Tyr). This Streptococcus uberis (strain ATCC BAA-854 / 0140J) protein is Tyrosine--tRNA ligase.